Consider the following 252-residue polypeptide: Chitooligosaccharide deacetylase (252 aa).

2 residues coordinate Mg(2+): His61 and His125.

It belongs to the YdjC deacetylase family. ChbG subfamily. As to quaternary structure, homodimer. It depends on Mg(2+) as a cofactor.

The protein localises to the cytoplasm. The enzyme catalyses N,N'-diacetylchitobiose + H2O = N-acetyl-beta-D-glucosaminyl-(1-&gt;4)-D-glucosamine + acetate. It catalyses the reaction diacetylchitobiose-6'-phosphate + H2O = N'-monoacetylchitobiose-6'-phosphate + acetate. It functions in the pathway glycan degradation; chitin degradation. Functionally, involved in the degradation of chitin. ChbG is essential for growth on the acetylated chitooligosaccharides chitobiose and chitotriose but is dispensable for growth on cellobiose and chitosan dimer, the deacetylated form of chitobiose. Deacetylation of chitobiose-6-P and chitotriose-6-P is necessary for both the activation of the chb promoter by the regulatory protein ChbR and the hydrolysis of phosphorylated beta-glucosides by the phospho-beta-glucosidase ChbF. Catalyzes the removal of only one acetyl group from chitobiose-6-P to yield monoacetylchitobiose-6-P, the inducer of ChbR and the substrate of ChbF. The chain is Chitooligosaccharide deacetylase from Salmonella schwarzengrund (strain CVM19633).